Reading from the N-terminus, the 357-residue chain is MSRTVQLVVIPGDGIGPEVIAEAVKALDAVTAGSGLAFQKTYFSLGADRYLATGDVLTDDDLAAIRGHDAILLGAVGGRPGDPRLAGANVERGLLLRLRFSLDHYVNLRPTTLFPGIASPLAAPGEVDFVVVREGTEGQYVGNGGAIRPGTPHEVANEVSVNTAYGVERVVRYAFEQAGQRRKKLTLVHKTNVLTFAGSLWKRIVDALAAEHPEVAVDYLHVDAATIFLVTDPARFDVIVTDNLFGDILTDLAAAISGGIGLAASGNINPVGEFPSMFEPVHGSAPDIAGEQRADPTAAILSVALLLRHLGERPLAERVERAVTTDLAARSGQMATASQTRTTSQIGDAIAALAAQN.

Arg-99, Arg-109, Arg-133, and Asp-223 together coordinate substrate. Residues Asp-223, Asp-247, and Asp-251 each coordinate Mg(2+). 283–295 lines the NAD(+) pocket; the sequence is GSAPDIAGEQRAD.

This sequence belongs to the isocitrate and isopropylmalate dehydrogenases family. LeuB type 2 subfamily. As to quaternary structure, homodimer. It depends on Mg(2+) as a cofactor. Mn(2+) serves as cofactor.

The protein resides in the cytoplasm. It catalyses the reaction (2R,3S)-3-isopropylmalate + NAD(+) = 4-methyl-2-oxopentanoate + CO2 + NADH. Its pathway is amino-acid biosynthesis; L-leucine biosynthesis; L-leucine from 3-methyl-2-oxobutanoate: step 3/4. Functionally, catalyzes the oxidation of 3-carboxy-2-hydroxy-4-methylpentanoate (3-isopropylmalate) to 3-carboxy-4-methyl-2-oxopentanoate. The product decarboxylates to 4-methyl-2 oxopentanoate. This Leifsonia xyli subsp. xyli (strain CTCB07) protein is 3-isopropylmalate dehydrogenase.